We begin with the raw amino-acid sequence, 490 residues long: Ribulose bisphosphate carboxylase large chain (490 aa).

Asn-127 and Thr-177 together coordinate substrate. Catalysis depends on Lys-179, which acts as the Proton acceptor. Position 181 (Lys-181) interacts with substrate. Mg(2+)-binding residues include Lys-205, Asp-207, and Glu-208. Position 205 is an N6-carboxylysine (Lys-205). His-297 (proton acceptor) is an active-site residue. The substrate site is built by Arg-298, His-330, and Ser-382.

This sequence belongs to the RuBisCO large chain family. Type I subfamily. As to quaternary structure, heterohexadecamer of 8 large chains and 8 small chains. Mg(2+) serves as cofactor.

Its subcellular location is the plastid. It localises to the chloroplast. The enzyme catalyses 2 (2R)-3-phosphoglycerate + 2 H(+) = D-ribulose 1,5-bisphosphate + CO2 + H2O. The catalysed reaction is D-ribulose 1,5-bisphosphate + O2 = 2-phosphoglycolate + (2R)-3-phosphoglycerate + 2 H(+). Functionally, ruBisCO catalyzes two reactions: the carboxylation of D-ribulose 1,5-bisphosphate, the primary event in carbon dioxide fixation, as well as the oxidative fragmentation of the pentose substrate in the photorespiration process. Both reactions occur simultaneously and in competition at the same active site. The sequence is that of Ribulose bisphosphate carboxylase large chain from Thalassiosira nordenskioeldii (Marine diatom).